The primary structure comprises 216 residues: Imidazole glycerol phosphate synthase subunit HisH (216 aa).

The Glutamine amidotransferase type-1 domain occupies 5–213 (RLAVIDYDAG…VEFVARRLPA (209 aa)). Cys-83 serves as the catalytic Nucleophile. Residues His-188 and Glu-190 contribute to the active site.

In terms of assembly, heterodimer of HisH and HisF.

The protein localises to the cytoplasm. The enzyme catalyses 5-[(5-phospho-1-deoxy-D-ribulos-1-ylimino)methylamino]-1-(5-phospho-beta-D-ribosyl)imidazole-4-carboxamide + L-glutamine = D-erythro-1-(imidazol-4-yl)glycerol 3-phosphate + 5-amino-1-(5-phospho-beta-D-ribosyl)imidazole-4-carboxamide + L-glutamate + H(+). The catalysed reaction is L-glutamine + H2O = L-glutamate + NH4(+). Its pathway is amino-acid biosynthesis; L-histidine biosynthesis; L-histidine from 5-phospho-alpha-D-ribose 1-diphosphate: step 5/9. IGPS catalyzes the conversion of PRFAR and glutamine to IGP, AICAR and glutamate. The HisH subunit catalyzes the hydrolysis of glutamine to glutamate and ammonia as part of the synthesis of IGP and AICAR. The resulting ammonia molecule is channeled to the active site of HisF. This chain is Imidazole glycerol phosphate synthase subunit HisH, found in Synechococcus sp. (strain JA-3-3Ab) (Cyanobacteria bacterium Yellowstone A-Prime).